The sequence spans 189 residues: Potassium-transporting ATPase KdpC subunit (189 aa).

A helical transmembrane segment spans residues 5–25 (LLPALTMLLVFTVITGIVYPL).

This sequence belongs to the KdpC family. As to quaternary structure, the system is composed of three essential subunits: KdpA, KdpB and KdpC.

Its subcellular location is the cell membrane. Functionally, part of the high-affinity ATP-driven potassium transport (or Kdp) system, which catalyzes the hydrolysis of ATP coupled with the electrogenic transport of potassium into the cytoplasm. This subunit acts as a catalytic chaperone that increases the ATP-binding affinity of the ATP-hydrolyzing subunit KdpB by the formation of a transient KdpB/KdpC/ATP ternary complex. This chain is Potassium-transporting ATPase KdpC subunit, found in Mycobacterium bovis (strain ATCC BAA-935 / AF2122/97).